Here is a 287-residue protein sequence, read N- to C-terminus: MDTDASLLLGVEHEQKQQEELYQQLLLQTMGKLQSDSPPSKVIRPQPGLCVKTSSVSDKKKVFLNICQSQTVPPPPHLSQEALVELLESEDPTSYRVPMSLGEPHTEVDNSSQGCTVYDVVINDEFFQKCEKDTLFQQFLIAVSLEGLENKYSLELSRDIKILKNRKFMGSIAEQNIRTKSKPIIQEIDSKESLTLPSAAKRPEFTLLVEPPSGKAEHLIAEILLPGVSSARSLVLDLGEDRLVLIARPSLFHLDIFFPVLIDQENSVAQYNTNTQTLTVTMPVVSL.

Belongs to the PIH1 family.

Its subcellular location is the nucleus. Its function is as follows. Involved in the assembly of C/D box small nucleolar ribonucleoprotein (snoRNP) particles. Recruits the SWI/SNF complex to the core promoter of rRNA genes and enhances pre-rRNA transcription. Mediates interaction of TELO2 with the R2TP complex which is necessary for the stability of MTOR and SMG1. Positively regulates the assembly and activity of the mTORC1 complex. This chain is PIH1 domain-containing protein 1 (pih1d1), found in Danio rerio (Zebrafish).